A 551-amino-acid chain; its full sequence is Cytosolic Fe-S cluster assembly factor NAR1 (551 aa).

Residues Cys-20, Cys-57, Cys-60, Cys-63, Cys-178, and Cys-242 each coordinate [4Fe-4S] cluster. Positions 395 to 435 (DPSGHKKRSVRRVAALRSRGRKDSSSEDSTGTPSAISNALG) are disordered. Positions 421-431 (EDSTGTPSAIS) are enriched in polar residues. [4Fe-4S] cluster is bound at residue Cys-451.

It belongs to the NARF family.

Its function is as follows. Component of the cytosolic Fe/S protein assembly machinery. Required for maturation of extramitochondrial Fe/S proteins. May play a role in the transfer of pre-assembled Fe/S clusters to target apoproteins. In Candida glabrata (strain ATCC 2001 / BCRC 20586 / JCM 3761 / NBRC 0622 / NRRL Y-65 / CBS 138) (Yeast), this protein is Cytosolic Fe-S cluster assembly factor NAR1 (NAR1).